The following is a 610-amino-acid chain: Elongation factor 4 (610 aa).

In terms of domain architecture, tr-type G spans 12–194; sequence EKIRNFSIIA…QIVEKVPAPQ (183 aa). Residues 24-29 and 141-144 contribute to the GTP site; these read DHGKST and NKID.

Belongs to the TRAFAC class translation factor GTPase superfamily. Classic translation factor GTPase family. LepA subfamily.

Its subcellular location is the cell membrane. It carries out the reaction GTP + H2O = GDP + phosphate + H(+). Functionally, required for accurate and efficient protein synthesis under certain stress conditions. May act as a fidelity factor of the translation reaction, by catalyzing a one-codon backward translocation of tRNAs on improperly translocated ribosomes. Back-translocation proceeds from a post-translocation (POST) complex to a pre-translocation (PRE) complex, thus giving elongation factor G a second chance to translocate the tRNAs correctly. Binds to ribosomes in a GTP-dependent manner. The sequence is that of Elongation factor 4 from Streptococcus thermophilus (strain CNRZ 1066).